A 423-amino-acid chain; its full sequence is Histidine--tRNA ligase (423 aa).

This sequence belongs to the class-II aminoacyl-tRNA synthetase family. As to quaternary structure, homodimer.

Its subcellular location is the cytoplasm. The enzyme catalyses tRNA(His) + L-histidine + ATP = L-histidyl-tRNA(His) + AMP + diphosphate + H(+). In Haemophilus influenzae (strain ATCC 51907 / DSM 11121 / KW20 / Rd), this protein is Histidine--tRNA ligase (hisS).